The chain runs to 384 residues: Alanine racemase (384 aa).

Lysine 42 acts as the Proton acceptor; specific for D-alanine in catalysis. N6-(pyridoxal phosphate)lysine is present on lysine 42. A substrate-binding site is contributed by arginine 140. Tyrosine 271 serves as the catalytic Proton acceptor; specific for L-alanine. Methionine 319 is a binding site for substrate.

It belongs to the alanine racemase family. Homodimer. Pyridoxal 5'-phosphate serves as cofactor.

The catalysed reaction is L-alanine = D-alanine. Its pathway is amino-acid biosynthesis; D-alanine biosynthesis; D-alanine from L-alanine: step 1/1. In terms of biological role, catalyzes the interconversion of L-alanine and D-alanine. This is Alanine racemase (alr) from Mycobacterium tuberculosis (strain CDC 1551 / Oshkosh).